Here is a 257-residue protein sequence, read N- to C-terminus: Ribonuclease HII (257 aa).

Residues 72–257 (ERVAGIDEVG…FSPVQKILQA (186 aa)) enclose the RNase H type-2 domain. A divalent metal cation contacts are provided by Asp78, Glu79, and Asp170.

The protein belongs to the RNase HII family. Mn(2+) serves as cofactor. It depends on Mg(2+) as a cofactor.

The protein localises to the cytoplasm. It carries out the reaction Endonucleolytic cleavage to 5'-phosphomonoester.. In terms of biological role, endonuclease that specifically degrades the RNA of RNA-DNA hybrids. The protein is Ribonuclease HII of Levilactobacillus brevis (strain ATCC 367 / BCRC 12310 / CIP 105137 / JCM 1170 / LMG 11437 / NCIMB 947 / NCTC 947) (Lactobacillus brevis).